The following is a 287-amino-acid chain: Nematocyst expressed protein 6 (287 aa).

The N-terminal stretch at 1–20 (MKGFIFAGVLVSALICLAEG) is a signal peptide. Positions 53-249 (RAALRDRYLW…RQTNLMYKCN (197 aa)) constitute a Peptidase M12A domain. Cystine bridges form between Cys95-Cys248 and Cys116-Cys139. Residue His146 coordinates Zn(2+). Glu147 is an active-site residue. The Zn(2+) site is built by His150 and His156. The disordered stretch occupies residues 249–287 (NAQGDSELQPVNDEDEDKDGGDSKKKPDPKGPKPGEIEE). Residues 268-287 (GGDSKKKPDPKGPKPGEIEE) are compositionally biased toward basic and acidic residues.

Zn(2+) serves as cofactor. As to expression, nematocyte and pharyngeal gland.

It localises to the secreted. The protein localises to the nematocyst. In terms of biological role, metalloprotease. This Nematostella vectensis (Starlet sea anemone) protein is Nematocyst expressed protein 6.